We begin with the raw amino-acid sequence, 344 residues long: Ferrochelatase (344 aa).

The Fe cation site is built by His214 and Glu295.

It belongs to the ferrochelatase family.

Its subcellular location is the cytoplasm. The enzyme catalyses heme b + 2 H(+) = protoporphyrin IX + Fe(2+). It functions in the pathway porphyrin-containing compound metabolism; protoheme biosynthesis; protoheme from protoporphyrin-IX: step 1/1. In terms of biological role, catalyzes the ferrous insertion into protoporphyrin IX. In Rhizobium leguminosarum bv. trifolii (strain WSM2304), this protein is Ferrochelatase.